Here is a 109-residue protein sequence, read N- to C-terminus: COX assembly mitochondrial protein 2 (109 aa).

A CHCH domain is found at 10–54 (FHSCLDFINALDKCHQKEYYKRIFGLCNNEKDALNKCLKEASLNN). 2 consecutive short sequence motifs (cx9C motif) follow at residues 13–23 (CLDFINALDKC) and 36–46 (CNNEKDALNKC). 2 cysteine pairs are disulfide-bonded: C13/C46 and C23/C36.

The protein belongs to the CMC family. As to quaternary structure, interacts with CMC1.

The protein localises to the mitochondrion inner membrane. It localises to the mitochondrion intermembrane space. Functionally, required for mitochondrial cytochrome c oxidase (COX) assembly and respiration. May be involved in copper trafficking and distribution to mitochondrial COX and SOD1. This is COX assembly mitochondrial protein 2 (CMC2) from Saccharomyces cerevisiae (strain ATCC 204508 / S288c) (Baker's yeast).